The sequence spans 362 residues: Adenosine deaminase (362 aa).

Zn(2+) is bound by residues His19 and His21. 3 residues coordinate substrate: His21, Asp23, and Gly181. His208 is a Zn(2+) binding site. Catalysis depends on Glu211, which acts as the Proton donor. Asp300 serves as a coordination point for Zn(2+).

Belongs to the metallo-dependent hydrolases superfamily. Adenosine and AMP deaminases family. Adenosine deaminase subfamily. It depends on Zn(2+) as a cofactor.

It carries out the reaction adenosine + H2O + H(+) = inosine + NH4(+). It catalyses the reaction 2'-deoxyadenosine + H2O + H(+) = 2'-deoxyinosine + NH4(+). Its function is as follows. Catalyzes the hydrolytic deamination of adenosine and 2-deoxyadenosine. The protein is Adenosine deaminase of Mycolicibacterium gilvum (strain PYR-GCK) (Mycobacterium gilvum (strain PYR-GCK)).